The following is a 358-amino-acid chain: Methylthioribose-1-phosphate isomerase (358 aa).

Substrate is bound by residues 54 to 56 (RGA), Arg96, and Gln205. Asp246 serves as the catalytic Proton donor. 256-257 (AK) contributes to the substrate binding site.

Belongs to the eIF-2B alpha/beta/delta subunits family. MtnA subfamily.

It carries out the reaction 5-(methylsulfanyl)-alpha-D-ribose 1-phosphate = 5-(methylsulfanyl)-D-ribulose 1-phosphate. Its pathway is amino-acid biosynthesis; L-methionine biosynthesis via salvage pathway; L-methionine from S-methyl-5-thio-alpha-D-ribose 1-phosphate: step 1/6. Catalyzes the interconversion of methylthioribose-1-phosphate (MTR-1-P) into methylthioribulose-1-phosphate (MTRu-1-P). The sequence is that of Methylthioribose-1-phosphate isomerase from Pseudomonas entomophila (strain L48).